A 149-amino-acid chain; its full sequence is 3-dehydroquinate dehydratase (149 aa).

The Proton acceptor role is filled by Y26. Residues N78, H84, and D91 each contribute to the substrate site. The active-site Proton donor is the H104. Substrate contacts are provided by residues 105 to 106 (LS) and R115.

Belongs to the type-II 3-dehydroquinase family. In terms of assembly, homododecamer.

The catalysed reaction is 3-dehydroquinate = 3-dehydroshikimate + H2O. It functions in the pathway metabolic intermediate biosynthesis; chorismate biosynthesis; chorismate from D-erythrose 4-phosphate and phosphoenolpyruvate: step 3/7. Functionally, catalyzes a trans-dehydration via an enolate intermediate. This is 3-dehydroquinate dehydratase from Polynucleobacter necessarius subsp. necessarius (strain STIR1).